Reading from the N-terminus, the 517-residue chain is Serine carboxypeptidase ctsa-3.2 (517 aa).

The N-terminal stretch at 1 to 21 (MWWTSLVFSVLLFDLIFISNC) is a signal peptide. Ser-172 is an active-site residue. N-linked (GlcNAc...) asparagine glycosylation occurs at Asn-269. Active-site residues include Asp-418 and His-485.

It belongs to the peptidase S10 family.

In Caenorhabditis elegans, this protein is Serine carboxypeptidase ctsa-3.2.